We begin with the raw amino-acid sequence, 162 residues long: 2-C-methyl-D-erythritol 2,4-cyclodiphosphate synthase (162 aa).

A divalent metal cation is bound by residues D12 and H14. Residues 12 to 14 and 38 to 39 each bind 4-CDP-2-C-methyl-D-erythritol 2-phosphate; these read DVH and HS. H46 provides a ligand contact to a divalent metal cation. Residues 60 to 62, 65 to 69, and R146 each bind 4-CDP-2-C-methyl-D-erythritol 2-phosphate; these read DIG and FPDTD.

This sequence belongs to the IspF family. Homotrimer. A divalent metal cation is required as a cofactor.

It carries out the reaction 4-CDP-2-C-methyl-D-erythritol 2-phosphate = 2-C-methyl-D-erythritol 2,4-cyclic diphosphate + CMP. The protein operates within isoprenoid biosynthesis; isopentenyl diphosphate biosynthesis via DXP pathway; isopentenyl diphosphate from 1-deoxy-D-xylulose 5-phosphate: step 4/6. In terms of biological role, involved in the biosynthesis of isopentenyl diphosphate (IPP) and dimethylallyl diphosphate (DMAPP), two major building blocks of isoprenoid compounds. Catalyzes the conversion of 4-diphosphocytidyl-2-C-methyl-D-erythritol 2-phosphate (CDP-ME2P) to 2-C-methyl-D-erythritol 2,4-cyclodiphosphate (ME-CPP) with a corresponding release of cytidine 5-monophosphate (CMP). The sequence is that of 2-C-methyl-D-erythritol 2,4-cyclodiphosphate synthase from Bordetella avium (strain 197N).